Here is a 392-residue protein sequence, read N- to C-terminus: Nicotinate phosphoribosyltransferase (392 aa).

Phosphohistidine; by autocatalysis is present on His-216.

This sequence belongs to the NAPRTase family. Transiently phosphorylated on a His residue during the reaction cycle. Phosphorylation strongly increases the affinity for substrates and increases the rate of nicotinate D-ribonucleotide production. Dephosphorylation regenerates the low-affinity form of the enzyme, leading to product release.

It carries out the reaction nicotinate + 5-phospho-alpha-D-ribose 1-diphosphate + ATP + H2O = nicotinate beta-D-ribonucleotide + ADP + phosphate + diphosphate. It functions in the pathway cofactor biosynthesis; NAD(+) biosynthesis; nicotinate D-ribonucleotide from nicotinate: step 1/1. Catalyzes the synthesis of beta-nicotinate D-ribonucleotide from nicotinate and 5-phospho-D-ribose 1-phosphate at the expense of ATP. This Cupriavidus necator (strain ATCC 17699 / DSM 428 / KCTC 22496 / NCIMB 10442 / H16 / Stanier 337) (Ralstonia eutropha) protein is Nicotinate phosphoribosyltransferase.